The following is a 291-amino-acid chain: Lys-63-specific deubiquitinase BRCC36 (291 aa).

The residue at position 2 (A2) is an N-acetylalanine. The 168-residue stretch at 12 to 179 (VHLESDAFLV…YTCFQSIQAQ (168 aa)) folds into the MPN domain. 3 residues coordinate Zn(2+): H122, H124, and D135. A JAMM motif motif is present at residues 122–135 (HSHPHITVWPSHVD). At S233 the chain carries Phosphoserine.

Belongs to the peptidase M67A family. BRCC36 subfamily. Component of the ARISC complex, at least composed of UIMC1/RAP80, ABRAXAS1, BRCC3/BRCC36, BABAM2 and BABAM1/NBA1. Component of the BRCA1-A complex, at least composed of BRCA1, BARD1, UIMC1/RAP80, ABRAXAS1, BRCC3/BRCC36, BABAM2 and BABAM1/NBA1. In the BRCA1-A complex, interacts directly with ABRAXAS1 and BABAM2. Component of the BRISC complex, at least composed of ABRAXAS2, BRCC3/BRCC36, BABAM2 and BABAM1/NBA1. Identified in a complex with SHMT2 and the other subunits of the BRISC complex. In the BRISC complex, interacts directly with ABRAXAS2. Identified in a complex with ABRAXAS2 and NUMA1. The BRISC complex interacts with the CSN complex. Component of the BRCA1/BRCA2 containing complex (BRCC), which also contains BRCA1, BRCA2, BARD1, BABAM2 and RAD51. BRCC is a ubiquitin E3 ligase complex that enhances cellular survival following DNA damage. Interacts with BRCA1. Binds polyubiquitin. Interacts with PWWP2B. Interacts with HDAC1; this interaction is enhanced in the presence of PWWP2B. The cofactor is Zn(2+).

The protein localises to the nucleus. Its subcellular location is the cytoplasm. The protein resides in the cytoskeleton. It localises to the spindle pole. Functionally, metalloprotease that specifically cleaves 'Lys-63'-linked polyubiquitin chains. Does not have activity toward 'Lys-48'-linked polyubiquitin chains. Component of the BRCA1-A complex, a complex that specifically recognizes 'Lys-63'-linked ubiquitinated histones H2A and H2AX at DNA lesions sites, leading to target the BRCA1-BARD1 heterodimer to sites of DNA damage at double-strand breaks (DSBs). In the BRCA1-A complex, it specifically removes 'Lys-63'-linked ubiquitin on histones H2A and H2AX, antagonizing the RNF8-dependent ubiquitination at double-strand breaks (DSBs). Catalytic subunit of the BRISC complex, a multiprotein complex that specifically cleaves 'Lys-63'-linked ubiquitin in various substrates. Mediates the specific 'Lys-63'-specific deubiquitination associated with the COP9 signalosome complex (CSN), via the interaction of the BRISC complex with the CSN complex. The BRISC complex is required for normal mitotic spindle assembly and microtubule attachment to kinetochores via its role in deubiquitinating NUMA1. Plays a role in interferon signaling via its role in the deubiquitination of the interferon receptor IFNAR1; deubiquitination increases IFNAR1 activity by enhancing its stability and cell surface expression. Acts as a regulator of the NLRP3 inflammasome by mediating deubiquitination of NLRP3, leading to NLRP3 inflammasome assembly. Down-regulates the response to bacterial lipopolysaccharide (LPS) via its role in IFNAR1 deubiquitination. Deubiquitinates HDAC1 and PWWP2B leading to their stabilization. The protein is Lys-63-specific deubiquitinase BRCC36 (Brcc3) of Mus musculus (Mouse).